A 518-amino-acid chain; its full sequence is Cytokinin hydroxylase (518 aa).

A helical transmembrane segment spans residues 1-21 (MLLTILKSLLVIFVTTILRVL). C464 serves as a coordination point for heme.

It belongs to the cytochrome P450 family. Heme is required as a cofactor. Expressed in roots and flowers.

It localises to the membrane. It carries out the reaction N(6)-(dimethylallyl)adenosine 5'-phosphate + NADPH + O2 + H(+) = 9-ribosyl-trans-zeatin 5'-phosphate + NADP(+) + H2O. It catalyses the reaction N(6)-(dimethylallyl)adenosine 5'-diphosphate + NADPH + O2 + H(+) = 9-ribosyl-trans-zeatin 5'-diphosphate + NADP(+) + H2O. The catalysed reaction is N(6)-(dimethylallyl)adenosine 5'-triphosphate + NADPH + O2 + H(+) = 9-ribosyl-trans-zeatin 5'-triphosphate + NADP(+) + H2O. Its function is as follows. Cytokinin hydroxylase that catalyzes the biosynthesis of trans-zeatin via the isopentenyladenine riboside 5'-monophosphate (iPRMP)-dependent pathway. Can use isopentenyladenosine-5'-monophosphate, isopentenyladenosine-5'-diphosphate and isopentenyladenosine-5'-triphosphate as substrate. This Arabidopsis thaliana (Mouse-ear cress) protein is Cytokinin hydroxylase (CYP735A1).